We begin with the raw amino-acid sequence, 291 residues long: Ribosomal RNA small subunit methyltransferase A (291 aa).

His-21, Leu-23, Gly-48, Glu-70, Asp-95, and Asn-115 together coordinate S-adenosyl-L-methionine.

It belongs to the class I-like SAM-binding methyltransferase superfamily. rRNA adenine N(6)-methyltransferase family. RsmA subfamily.

The protein resides in the cytoplasm. It carries out the reaction adenosine(1518)/adenosine(1519) in 16S rRNA + 4 S-adenosyl-L-methionine = N(6)-dimethyladenosine(1518)/N(6)-dimethyladenosine(1519) in 16S rRNA + 4 S-adenosyl-L-homocysteine + 4 H(+). Specifically dimethylates two adjacent adenosines (A1518 and A1519) in the loop of a conserved hairpin near the 3'-end of 16S rRNA in the 30S particle. May play a critical role in biogenesis of 30S subunits. This is Ribosomal RNA small subunit methyltransferase A from Prochlorococcus marinus (strain NATL2A).